The following is a 353-amino-acid chain: Quinolinate synthase (353 aa).

Iminosuccinate is bound by residues His49 and Ser70. Cys115 is a [4Fe-4S] cluster binding site. Residues 141–143 (YAN) and Ser158 contribute to the iminosuccinate site. Cys202 provides a ligand contact to [4Fe-4S] cluster. Residues 228–230 (HPE) and Thr245 each bind iminosuccinate. [4Fe-4S] cluster is bound at residue Cys299.

The protein belongs to the quinolinate synthase family. Type 1 subfamily. Requires [4Fe-4S] cluster as cofactor.

It localises to the cytoplasm. It carries out the reaction iminosuccinate + dihydroxyacetone phosphate = quinolinate + phosphate + 2 H2O + H(+). Its pathway is cofactor biosynthesis; NAD(+) biosynthesis; quinolinate from iminoaspartate: step 1/1. In terms of biological role, catalyzes the condensation of iminoaspartate with dihydroxyacetone phosphate to form quinolinate. This is Quinolinate synthase from Marinobacter nauticus (strain ATCC 700491 / DSM 11845 / VT8) (Marinobacter aquaeolei).